The primary structure comprises 704 residues: Sulfate anion transporter 1 (704 aa).

A Phosphothreonine modification is found at T13. 2 consecutive transmembrane segments (helical) span residues 68–90 (YLAG…AIAY) and 94–116 (AGLQ…FLMG). N-linked (GlcNAc...) asparagine glycosylation is found at N158 and N163. Transmembrane regions (helical) follow at residues 185-207 (VATA…RLGF), 260-282 (NVGQ…LLAA), 295-314 (VPIP…SHFG), 347-369 (ALDA…EMFA), 382-404 (LLAV…SAAL), 417-439 (TQLS…APLF), and 477-499 (LVWV…LAGV). The 159-residue stretch at 532–690 (EFEGLLPPPE…PSVHSAVEAA (159 aa)) folds into the STAS domain. Phosphoserine is present on S587. An N-linked (GlcNAc...) asparagine glycan is attached at N588. S590 carries the post-translational modification Phosphoserine.

This sequence belongs to the SLC26A/SulP transporter (TC 2.A.53) family. Expressed in the heart, cecum, calvaria, brain, liver, skeletal muscle and kidney.

It is found in the cell membrane. It localises to the basolateral cell membrane. It carries out the reaction thiosulfate(in) + sulfate(out) = thiosulfate(out) + sulfate(in). It catalyses the reaction 2 hydrogencarbonate(out) + sulfate(in) = 2 hydrogencarbonate(in) + sulfate(out). The catalysed reaction is oxalate(in) + sulfate(out) = oxalate(out) + sulfate(in). The enzyme catalyses oxalate(in) + 2 hydrogencarbonate(out) = oxalate(out) + 2 hydrogencarbonate(in). Sodium-independent sulfate anion transporter. Can transport other anions including bicarbonate, thiosulfate and oxalate by mediating sulfate-hydrogencarbonate, sulfate-oxalate and oxalate-hydrogencarbonate anion exchange. Mediates sulfate-thiosulfate anion exchange. The chain is Sulfate anion transporter 1 (Slc26a1) from Mus musculus (Mouse).